The primary structure comprises 102 residues: A-type ATP synthase subunit F (102 aa).

Belongs to the V-ATPase F subunit family. Has multiple subunits with at least A(3), B(3), C, D, E, F, H, I and proteolipid K(x).

The protein localises to the cell membrane. Component of the A-type ATP synthase that produces ATP from ADP in the presence of a proton gradient across the membrane. The chain is A-type ATP synthase subunit F from Thermococcus kodakarensis (strain ATCC BAA-918 / JCM 12380 / KOD1) (Pyrococcus kodakaraensis (strain KOD1)).